The chain runs to 179 residues: Putative mediator of RNA polymerase II transcription subunit 28 (179 aa).

Residues serine 81 to tyrosine 119 are a coiled coil.

Belongs to the Mediator complex subunit 28 family. As to quaternary structure, component of the Mediator complex.

The protein resides in the nucleus. Functionally, component of the Mediator complex, a coactivator involved in the regulated transcription of nearly all RNA polymerase II-dependent genes. Mediator functions as a bridge to convey information from gene-specific regulatory proteins to the basal RNA polymerase II transcription machinery. Mediator is recruited to promoters by direct interactions with regulatory proteins and serves as a scaffold for the assembly of a functional preinitiation complex with RNA polymerase II and the general transcription factors. The chain is Putative mediator of RNA polymerase II transcription subunit 28 (med28) from Dictyostelium discoideum (Social amoeba).